We begin with the raw amino-acid sequence, 94 residues long: Progonadoliberin-3 (94 aa).

The first 23 residues, 1–23 (MEGKGRVLVQLLMLACVLEVSLC), serve as a signal peptide directing secretion. A Pyrrolidone carboxylic acid modification is found at glutamine 24. Glycine 33 is subject to Glycine amide.

Belongs to the GnRH family.

It is found in the secreted. Its function is as follows. Stimulates the secretion of gonadotropins. In Carassius auratus (Goldfish), this protein is Progonadoliberin-3 (gnrh3).